Consider the following 500-residue polypeptide: Perfringolysin O (500 aa).

The signal sequence occupies residues 1-28 (MIRFKKTKLIASIAMALCLFSQPVISFS). Transmembrane regions (beta stranded) follow at residues 189-202 (KSQISSALNVNAKV), 209-218 (VDFNAVANNE), 287-296 (SKDVQAAFKA), and 304-316 (KNSQQYKDIYENS). The short motif at 458–468 (ECTGLAWEWWR) is the Conserved undecapeptide element. The Cholesterol binding signature appears at 490 to 491 (TL).

The protein belongs to the cholesterol-dependent cytolysin family. In terms of assembly, homooligomeric pore complex of 35 to 50 subunits; when inserted in the host membrane.

The protein resides in the secreted. It is found in the host cell membrane. Its function is as follows. A cholesterol-dependent toxin that causes cytolysis by forming pores in cholesterol containing host membranes. After binding to target membranes, the protein assembles into a pre-pore complex. A conformation change leads to insertion in the host membrane and formation of an oligomeric pore complex. Cholesterol is required for binding to host cell membranes, membrane insertion and pore formation; cholesterol binding is mediated by a Thr-Leu pair in the C-terminus. Can be reversibly inactivated by oxidation. This Clostridium perfringens (strain ATCC 13124 / DSM 756 / JCM 1290 / NCIMB 6125 / NCTC 8237 / Type A) protein is Perfringolysin O (pfo).